The sequence spans 310 residues: 4-hydroxyproline epimerase (310 aa).

Cysteine 88 serves as the catalytic Proton acceptor. Substrate contacts are provided by residues 89–90, histidine 208, and aspartate 232; that span reads GH. The active-site Proton donor is the cysteine 236. Position 237–238 (237–238) interacts with substrate; it reads GT.

Belongs to the proline racemase family. Homodimer.

It catalyses the reaction trans-4-hydroxy-L-proline = cis-4-hydroxy-D-proline. Its activity is regulated as follows. Inhibited by iodoacetate, iodoacetamide and by high amounts (10 mM) of pyrrole-2-carboxylic acid (PYC). Not inhibited by PYC at 1 mM. Its function is as follows. Allows intracellular utilization of 4-hydroxyproline, one of the major constituents of host collagen, by converting 4-hydroxy-L-proline to 4-hydroxy-D-proline, which can be further metabolized by intracellular 4-hydroxy-D-proline oxidases. The protein is 4-hydroxyproline epimerase of Burkholderia pseudomallei (strain K96243).